Here is a 496-residue protein sequence, read N- to C-terminus: Transcription factor CP2 (496 aa).

The 240-residue stretch at 61-300 (ENKILPFQYV…SPGFNSSHSS (240 aa)) folds into the Grh/CP2 DB domain. The segment at 133–386 (EHQQLEGWRW…LFNALKGRMV (254 aa)) is DNA-binding. 2 disordered regions span residues 238–268 (FKPKGADRKQKTDREKMEKRTPHEKEKYQPS) and 296–327 (SSHSSFSIGEGNGSPNHQPEPPPPIADNLLPT). A compositionally biased stretch (basic and acidic residues) spans 241 to 265 (KGADRKQKTDREKMEKRTPHEKEKY).

This sequence belongs to the grh/CP2 family. CP2 subfamily. As to quaternary structure, component of the SSP (stage selector protein) complex, which appears to be a heteromer of TFCP2 and 2 copies of NFE4. As to expression, expressed in the epiblast at the pre-primitive streak stage. At the primitive streak stage, expressed in the extending primitive streak and in the prospective neural plate. At stages 7 and 8, expressed in the neural folds, somites and in the regressing primitive streak. At stage 12, ubiquitously expressed in the whole embryo.

Its subcellular location is the nucleus. Functionally, binds the B-response element 5'-CAAGTCCAGGCAAGT-3' of the ENS1/ERNI promoter. May be the major transcription activator thus being essential for its expression. The sequence is that of Transcription factor CP2 (TFCP2) from Gallus gallus (Chicken).